Here is a 215-residue protein sequence, read N- to C-terminus: MRKGKRVIKKIEEKIKRQVTFAKRKKSLIKKAYELSVLCDVHLGLIIFSHSNRLYDFCSNSTSMENLIMRYQKEKEGQTTAEHSFHSDQCSDCVKTKESMMREIENLKLNLQLYDGHGLNLLTYDELLSFELHLESSLQHARARKSEFMHQQQQQQTDQKLKGKEKGQGSSWEQLMWQAERQMMTCQRQKDPAPANEGGVPFLRWGTTHRRSSPP.

Residues 1–61 (MRKGKRVIKK…NRLYDFCSNS (61 aa)) enclose the MADS-box domain. Positions 90–178 (CSDCVKTKES…GSSWEQLMWQ (89 aa)) constitute a K-box domain. Disordered regions lie at residues 143–172 (ARKS…GSSW) and 184–215 (MTCQ…SSPP).

Forms homodimer. Interacts with AGL16. As to expression, expressed in bud pedicels, petals, anthers, style, ovary, seeds and embryos.

The protein localises to the nucleus. Functionally, probable transcription factor involved in the regulation of fruit growth. Contributes to integument development. Controls organ size via cell expansion. Involved in the regulation of longitudinal growth of the fruit evenly throughout the radial axis. Functions redundantly with TT16/AGL32 to repress nucellus growth and promote its degeneration. In Arabidopsis thaliana (Mouse-ear cress), this protein is Agamous-like MADS-box protein AGL63.